Consider the following 631-residue polypeptide: Probable potassium transport system protein Kup 1 (631 aa).

12 helical membrane-spanning segments follow: residues 16-36 (LGLS…SPLY), 58-78 (VLSL…LVFV), 109-129 (VLVF…TLTP), 145-165 (PLFH…LFLI), 173-193 (VGAL…LLGI), 219-239 (GWSG…GEAL), 255-275 (WFCC…ALLL), 288-308 (LAPP…TIIA), 345-365 (IYIP…VAGF), 370-390 (GLAA…ALLV), 402-422 (PLAV…FFGA), and 427-447 (VGAG…VMIT).

It belongs to the HAK/KUP transporter (TC 2.A.72) family.

The protein localises to the cell inner membrane. The catalysed reaction is K(+)(in) + H(+)(in) = K(+)(out) + H(+)(out). Transport of potassium into the cell. Likely operates as a K(+):H(+) symporter. The protein is Probable potassium transport system protein Kup 1 of Geobacter sulfurreducens (strain ATCC 51573 / DSM 12127 / PCA).